Here is a 124-residue protein sequence, read N- to C-terminus: MPTIQQLVRKGRRPKVNKTKSPALRGNPQQRGVCSRVYTTTPKKPNSALRKVARVKLSNGTEVTVYIPGEGHNLQEHSIVLVRGGRVKDLPGVRYKVVRGALDAQAVKDRKQARSRYGAKMEKK.

The interval 1 to 42 (MPTIQQLVRKGRRPKVNKTKSPALRGNPQQRGVCSRVYTTTP) is disordered. A compositionally biased stretch (basic residues) spans 9 to 18 (RKGRRPKVNK). Positions 27-42 (NPQQRGVCSRVYTTTP) are enriched in polar residues. Asp89 is modified (3-methylthioaspartic acid).

The protein belongs to the universal ribosomal protein uS12 family. In terms of assembly, part of the 30S ribosomal subunit. Contacts proteins S8 and S17. May interact with IF1 in the 30S initiation complex.

Functionally, with S4 and S5 plays an important role in translational accuracy. In terms of biological role, interacts with and stabilizes bases of the 16S rRNA that are involved in tRNA selection in the A site and with the mRNA backbone. Located at the interface of the 30S and 50S subunits, it traverses the body of the 30S subunit contacting proteins on the other side and probably holding the rRNA structure together. The combined cluster of proteins S8, S12 and S17 appears to hold together the shoulder and platform of the 30S subunit. The sequence is that of Small ribosomal subunit protein uS12 from Tropheryma whipplei (strain TW08/27) (Whipple's bacillus).